Consider the following 457-residue polypeptide: Multidrug resistance protein MdtK (457 aa).

The Cytoplasmic portion of the chain corresponds to 1–10 (MQKYISEARL). A helical membrane pass occupies residues 11 to 31 (LLALAIPVILAQIAQTAMGFV). The Extracellular portion of the chain corresponds to 32 to 52 (DTVMAGGYSATDMAAVAIGTS). The chain crosses the membrane as a helical span at residues 53-73 (IWLPAILFGHGLLLALTPVIA). Topologically, residues 74–92 (QLNGSGRRERIAHQVRQGF) are cytoplasmic. A helical transmembrane segment spans residues 93–113 (WLAGFVSVLIMLVLWNAGYII). Residues 114 to 126 (RSMENIDPALADK) are Extracellular-facing. The chain crosses the membrane as a helical span at residues 127 to 147 (AVGYLRALLWGAPGYLFFQVA). The Cytoplasmic segment spans residues 148–159 (RNQCEGLAKTKP). A helical membrane pass occupies residues 160 to 180 (GMVMGFIGLLVNIPVNYIFIY). The Extracellular portion of the chain corresponds to 181 to 188 (GHFGMPEL). Residues 189–209 (GGVGCGVATAAVYWVMFLAMV) form a helical membrane-spanning segment. Residues 210–242 (SYIKRARSMRDIRNEKGTAKPDPAVMKRLIQLG) lie on the Cytoplasmic side of the membrane. The helical transmembrane segment at 243–263 (LPIALALFFEVTLFAVVALLV) threads the bilayer. The Extracellular portion of the chain corresponds to 264–275 (SPLGIVDVAGHQ). The helical transmembrane segment at 276-296 (IALNFSSLMFVLPMSLAAAVT) threads the bilayer. The Cytoplasmic segment spans residues 297–313 (IRVGYRLGQGSTLDAQT). Residues 314–334 (AARTGLMVGVCMATLTAIFTV) form a helical membrane-spanning segment. Topologically, residues 335–349 (SLREQIALLYNDNPE) are extracellular. The chain crosses the membrane as a helical span at residues 350 to 370 (VVTLAAHLMLLAAVYQISDSI). The Cytoplasmic portion of the chain corresponds to 371–386 (QVIGSGILRGYKDTRS). A helical transmembrane segment spans residues 387-407 (IFYITFTAYWVLGLPSGYILA). At 408–417 (LTDLVVEPMG) the chain is on the extracellular side. The helical transmembrane segment at 418–438 (PAGFWIGFIIGLTSAAIMMML) threads the bilayer. The Cytoplasmic segment spans residues 439–457 (RMRYLQRLPSAIILQRASR).

This sequence belongs to the multi antimicrobial extrusion (MATE) (TC 2.A.66.1) family. MdtK subfamily.

Its subcellular location is the cell inner membrane. Its function is as follows. Multidrug efflux pump that functions probably as a Na(+)/drug antiporter. In Escherichia coli O157:H7, this protein is Multidrug resistance protein MdtK (mdtK).